The following is a 310-amino-acid chain: Protoheme IX farnesyltransferase (310 aa).

The next 9 membrane-spanning stretches (helical) occupy residues 26-45 (VMSLVVFTALVGLLVAPVTV), 49-71 (IALTGILFIALGAGASGALNMWW), 95-115 (GEALGIGLALSGIAVVMLGLA), 118-138 (LFAAGLLAFTIFFYAVVYSMW), 147-167 (IVIGGAAGAFPPMIGWAVATG), 174-194 (LFMFALIFMWTPPHFWSLALF), 220-240 (VLVYSLLLAPLAVAGAFTGIG), 243-263 (LYLATALALNGWLLVGAVRIW), and 289-309 (LFLHFGAILAEAALKPYGLGG).

It belongs to the UbiA prenyltransferase family. Protoheme IX farnesyltransferase subfamily. As to quaternary structure, interacts with CtaA.

It is found in the cell inner membrane. It catalyses the reaction heme b + (2E,6E)-farnesyl diphosphate + H2O = Fe(II)-heme o + diphosphate. The protein operates within porphyrin-containing compound metabolism; heme O biosynthesis; heme O from protoheme: step 1/1. In terms of biological role, converts heme B (protoheme IX) to heme O by substitution of the vinyl group on carbon 2 of heme B porphyrin ring with a hydroxyethyl farnesyl side group. This chain is Protoheme IX farnesyltransferase, found in Cereibacter sphaeroides (strain ATCC 17029 / ATH 2.4.9) (Rhodobacter sphaeroides).